The chain runs to 141 residues: Nucleoside diphosphate kinase (141 aa).

Lys9, Phe57, Arg85, Thr91, Arg102, and Asn112 together coordinate ATP. Catalysis depends on His115, which acts as the Pros-phosphohistidine intermediate.

It belongs to the NDK family. In terms of assembly, homotetramer. The cofactor is Mg(2+).

The protein resides in the cytoplasm. It catalyses the reaction a 2'-deoxyribonucleoside 5'-diphosphate + ATP = a 2'-deoxyribonucleoside 5'-triphosphate + ADP. The enzyme catalyses a ribonucleoside 5'-diphosphate + ATP = a ribonucleoside 5'-triphosphate + ADP. In terms of biological role, major role in the synthesis of nucleoside triphosphates other than ATP. The ATP gamma phosphate is transferred to the NDP beta phosphate via a ping-pong mechanism, using a phosphorylated active-site intermediate. The polypeptide is Nucleoside diphosphate kinase (Prosthecochloris aestuarii (strain DSM 271 / SK 413)).